Consider the following 181-residue polypeptide: NADH-quinone oxidoreductase subunit B (181 aa).

Positions 45, 46, 111, and 140 each coordinate [4Fe-4S] cluster.

It belongs to the complex I 20 kDa subunit family. NDH-1 is composed of 14 different subunits. Subunits NuoB, C, D, E, F, and G constitute the peripheral sector of the complex. It depends on [4Fe-4S] cluster as a cofactor.

The protein localises to the cell inner membrane. It catalyses the reaction a quinone + NADH + 5 H(+)(in) = a quinol + NAD(+) + 4 H(+)(out). Functionally, NDH-1 shuttles electrons from NADH, via FMN and iron-sulfur (Fe-S) centers, to quinones in the respiratory chain. The immediate electron acceptor for the enzyme in this species is believed to be a menaquinone. Couples the redox reaction to proton translocation (for every two electrons transferred, four hydrogen ions are translocated across the cytoplasmic membrane), and thus conserves the redox energy in a proton gradient. The chain is NADH-quinone oxidoreductase subunit B from Flavobacterium psychrophilum (strain ATCC 49511 / DSM 21280 / CIP 103535 / JIP02/86).